Reading from the N-terminus, the 96-residue chain is Protein Vpr (96 aa).

Residues 1–42 are homooligomerization; it reads MEQAPEDQGPQREPYNEWTIEILEELKREAVRHFPRPWLHDL. Phosphoserine; by host is present on residues Ser79, Ser94, and Ser96.

This sequence belongs to the HIV-1 VPR protein family. As to quaternary structure, homooligomer, may form homodimer. Interacts with p6-gag region of the Pr55 Gag precursor protein through a (Leu-X-X)4 motif near the C-terminus of the P6gag protein. Interacts with host UNG. May interact with host RAD23A/HHR23A. Interacts with host VPRBP/DCAF1, leading to hijack the CUL4A-RBX1-DDB1-DCAF1/VPRBP complex, mediating ubiquitination of host proteins such as TERT and ZGPAT and arrest of the cell cycle in G2 phase. Phosphorylated on several residues by host. These phosphorylations regulate VPR activity for the nuclear import of the HIV-1 pre-integration complex.

Its subcellular location is the virion. The protein localises to the host nucleus. It is found in the host extracellular space. Functionally, during virus replication, may deplete host UNG protein, and incude G2-M cell cycle arrest. Acts by targeting specific host proteins for degradation by the 26S proteasome, through association with the cellular CUL4A-DDB1 E3 ligase complex by direct interaction with host VPRPB/DCAF-1. Cell cycle arrest reportedly occurs within hours of infection and is not blocked by antiviral agents, suggesting that it is initiated by the VPR carried into the virion. Additionally, VPR induces apoptosis in a cell cycle dependent manner suggesting that these two effects are mechanistically linked. Detected in the serum and cerebrospinal fluid of AIDS patient, VPR may also induce cell death to bystander cells. During virus entry, plays a role in the transport of the viral pre-integration (PIC) complex to the host nucleus. This function is crucial for viral infection of non-dividing macrophages. May act directly at the nuclear pore complex, by binding nucleoporins phenylalanine-glycine (FG)-repeat regions. The chain is Protein Vpr from Human immunodeficiency virus type 1 group M subtype K (isolate 97ZR-EQTB11) (HIV-1).